Reading from the N-terminus, the 729-residue chain is Subtilisin-like protease SBT4.3 (729 aa).

An N-terminal signal peptide occupies residues 1–23 (MAKLSTPLYLICLAFIFTRDVSA). Positions 24–109 (NDYRQASSVY…VFPSKSHELT (86 aa)) are cleaved as a propeptide — activation peptide. Residues 32–108 (VYIVYMGTLP…SVFPSKSHEL (77 aa)) form the Inhibitor I9 domain. N-linked (GlcNAc...) asparagine glycosylation is present at N82. Residues 113 to 580 (SWDFVGFGEK…SGQINPTKAS (468 aa)) form the Peptidase S8 domain. Catalysis depends on charge relay system residues D139 and H196. N-linked (GlcNAc...) asparagine glycosylation is found at N275, N348, N359, and N363. In terms of domain architecture, PA spans 350–436 (TKFPIVYGQN…LGFEDYKSIK (87 aa)). S521 functions as the Charge relay system in the catalytic mechanism. N614, N642, and N656 each carry an N-linked (GlcNAc...) asparagine glycan.

This sequence belongs to the peptidase S8 family. In terms of processing, the C-terminal propeptide is autocleaved.

Its subcellular location is the secreted. This chain is Subtilisin-like protease SBT4.3, found in Arabidopsis thaliana (Mouse-ear cress).